Consider the following 248-residue polypeptide: Ribosomal RNA small subunit methyltransferase J (248 aa).

S-adenosyl-L-methionine-binding positions include 98 to 99 (RD), 114 to 115 (ER), 150 to 151 (SS), and Asp168.

It belongs to the methyltransferase superfamily. RsmJ family.

The protein resides in the cytoplasm. The catalysed reaction is guanosine(1516) in 16S rRNA + S-adenosyl-L-methionine = N(2)-methylguanosine(1516) in 16S rRNA + S-adenosyl-L-homocysteine + H(+). Functionally, specifically methylates the guanosine in position 1516 of 16S rRNA. This Shewanella baltica (strain OS185) protein is Ribosomal RNA small subunit methyltransferase J.